The following is a 214-amino-acid chain: Melanoregulin (214 aa).

A Cholesterol-binding sequence motif motif is present at residues 162–172 (LSERYLFVVDR). The residue at position 213 (S213) is a Phosphoserine.

This sequence belongs to the melanoregulin family. Identified in a complex with RILP and DCTN1; interacts directly with RILP, but does not interact directly with DCTN1. Interacts with PRPH2. Post-translationally, palmitoylated. Palmitoylation is required to maintain the protein at the melanosome membrane. As to expression, expressed in photoreceptor cells (at protein level).

Its subcellular location is the apical cell membrane. It is found in the melanosome membrane. The protein localises to the lysosome membrane. The protein resides in the cytoplasmic vesicle membrane. Its function is as follows. Probably functions as a cargo-recognition protein that couples cytoplasmic vesicles to the transport machinery. Plays a role in hair pigmentation, a process that involves shedding of melanosome-containing vesicles from melanocytes, followed by phagocytosis of the melanosome-containing vesicles by keratinocytes. Functions on melanosomes as receptor for RILP and the complex formed by RILP and DCTN1, and thereby contributes to retrograde melanosome transport from the cell periphery to the center. Overexpression causes accumulation of late endosomes and/or lysosomes at the microtubule organising center (MTOC) at the center of the cell. Probably binds cholesterol and requires the presence of cholesterol in membranes to function in microtubule-mediated retrograde organelle transport. Binds phosphatidylinositol 3-phosphate, phosphatidylinositol 4-phosphate, phosphatidylinositol 5-phosphate and phosphatidylinositol 3,5-bisphosphate, but not phosphatidylinositol 3,4-bisphosphate or phosphatidylinositol 4,5-bisphosphate. Required for normal phagosome clearing and normal activation of lysosomal enzymes in lysosomes from retinal pigment epithelium cells. Required for normal degradation of the lipofuscin component N-retinylidene-N-retinylethanolamine (A2E) in the eye. May function in membrane fusion and regulate the biogenesis of disk membranes of photoreceptor rod cells. This Homo sapiens (Human) protein is Melanoregulin (MREG).